The chain runs to 995 residues: DExH-box ATP-dependent RNA helicase DExH10 (995 aa).

Residues 1–42 (MSAQMEEPETLGKRKESESSKLRSDETPTPEPRTKRRSLKRA) form a disordered region. Ser-2 is modified (N-acetylserine). Over residues 10-26 (TLGKRKESESSKLRSDE) the composition is skewed to basic and acidic residues. The Helicase ATP-binding domain maps to 90–246 (VACLERKESI…WICYLHKQPC (157 aa)). 103-110 (AHTSAGKT) lines the ATP pocket. Residues 194-197 (DEIH) carry the DEIH box motif. The segment at 290–318 (DTFPKPKSNDGKKSANGKSGGRGAKGGGG) is disordered. The span at 307-318 (KSGGRGAKGGGG) shows a compositional bias: gly residues. The 202-residue stretch at 323–524 (DVYKIVKMIM…LSYYTILNLL (202 aa)) folds into the Helicase C-terminal domain.

The protein belongs to the DExH box helicase family. SKI2 subfamily. Expressed in inflorescences, leaves, stems, and roots.

The protein localises to the nucleus. The protein resides in the nucleoplasm. The enzyme catalyses ATP + H2O = ADP + phosphate + H(+). Functionally, ATP-dependent RNA helicase that associates with the RNA exosome complex, with the cap binding complex (CBC) and with the NEXT-like complex. Involved in the degradation of a large number of non-coding nuclear exosome substrates such as snoRNA and miRNA precursors, incompletely spliced mRNAs, and spurious transcripts produced from pseudogenes and intergenic regions. Involved in the maintenance of homeotic B and C gene expression in the reproductive whorls. Regulates floral organ spacing and identity, probably through the regulation of protein synthesis or mRNA degradation. The chain is DExH-box ATP-dependent RNA helicase DExH10 from Arabidopsis thaliana (Mouse-ear cress).